The sequence spans 196 residues: Cell division protein SepF (196 aa).

Residues 16-81 (EDDEEFNEPA…KRAGSTFTKP (66 aa)) are disordered. Positions 56–69 (RPAQSTSKAQTQTA) are enriched in polar residues.

It belongs to the SepF family. As to quaternary structure, homodimer. Interacts with FtsZ.

Its subcellular location is the cytoplasm. Cell division protein that is part of the divisome complex and is recruited early to the Z-ring. Probably stimulates Z-ring formation, perhaps through the cross-linking of FtsZ protofilaments. Its function overlaps with FtsA. This Lactococcus lactis subsp. lactis (strain IL1403) (Streptococcus lactis) protein is Cell division protein SepF.